Consider the following 156-residue polypeptide: Small ribosomal subunit protein uS7 (156 aa).

Belongs to the universal ribosomal protein uS7 family. Part of the 30S ribosomal subunit. Contacts proteins S9 and S11.

Its function is as follows. One of the primary rRNA binding proteins, it binds directly to 16S rRNA where it nucleates assembly of the head domain of the 30S subunit. Is located at the subunit interface close to the decoding center, probably blocks exit of the E-site tRNA. This Staphylococcus aureus (strain bovine RF122 / ET3-1) protein is Small ribosomal subunit protein uS7.